Here is a 564-residue protein sequence, read N- to C-terminus: MAESKPTPQSTFTGPIVVDPITRIEGHLRIMVEVENGKVKDAWSSSQLFRGLEIILKGRDPRDAQHFTQRACGVCTYVHALASSRCVDDAVKVSIPANARMMRNLVMASQYLHDHLVHFYHLHALDWVDVTAALKADPNKAAKLAASIAPARPGNSAKALKAVQDKLKAFVESGQLGIFTNAYFLGGHKAYYLPPEVDLIATAHYLEALHMQVKAASAMAILGGKNPHTQFTVVGGCSNYQGLTKDPLANYLALSKEVCQFVNECYIPDLLAVAGFYKDWGGIGGTSNYLAFGEFATDDSSPEKHLATSQFPSGVITGRDLGKVDNVDLGAIYEDVKYSWYAPGGDGKHPYDGVTDPKYTKLDDKDHYSWMKAPRYKGKAMEVGPLARTFIAYAKGQPDFKKVVDMVLGKLSVPATALHSTLGRTAARGIETAIVCANMEKWIKEMADSGAKDNTLCAKWEMPEESKGVGLADAPRGALSHWIRIKGKKIDNFQLVVPSTWNLGPRGAQGDKSPVEEALIGTPIADPKRPVEILRTVHAFDPCIACGVHVIEPETNEILKFKVC.

Positions 72, 75, 543, and 546 each coordinate Ni(2+). Residues 550–564 constitute a propeptide that is removed on maturation; it reads VIEPETNEILKFKVC.

The protein belongs to the [NiFe]/[NiFeSe] hydrogenase large subunit family. Heterodimer of a large and a small subunit. It depends on Ni(2+) as a cofactor.

The protein resides in the periplasm. It catalyses the reaction 2 Fe(III)-[cytochrome c3] + H2 = 2 Fe(II)-[cytochrome c3] + 2 H(+). The chain is Periplasmic [NiFe] hydrogenase large subunit (hydB) from Solidesulfovibrio fructosivorans (Desulfovibrio fructosivorans).